The sequence spans 165 residues: Chorismate pyruvate-lyase (165 aa).

4 residues coordinate substrate: methionine 35, arginine 77, leucine 115, and glutamate 156.

This sequence belongs to the UbiC family. In terms of assembly, monomer.

It is found in the cytoplasm. The catalysed reaction is chorismate = 4-hydroxybenzoate + pyruvate. It participates in cofactor biosynthesis; ubiquinone biosynthesis. In terms of biological role, removes the pyruvyl group from chorismate, with concomitant aromatization of the ring, to provide 4-hydroxybenzoate (4HB) for the ubiquinone pathway. This chain is Chorismate pyruvate-lyase, found in Salmonella arizonae (strain ATCC BAA-731 / CDC346-86 / RSK2980).